We begin with the raw amino-acid sequence, 821 residues long: Glycerol-3-phosphate acyltransferase (821 aa).

The short motif at 310–315 (CHRSHM) is the HXXXXD motif element.

It belongs to the GPAT/DAPAT family.

The protein resides in the cell membrane. It carries out the reaction sn-glycerol 3-phosphate + an acyl-CoA = a 1-acyl-sn-glycero-3-phosphate + CoA. It functions in the pathway phospholipid metabolism; CDP-diacylglycerol biosynthesis; CDP-diacylglycerol from sn-glycerol 3-phosphate: step 1/3. In Baumannia cicadellinicola subsp. Homalodisca coagulata, this protein is Glycerol-3-phosphate acyltransferase.